A 555-amino-acid chain; its full sequence is CTP synthase (555 aa).

Residues 1–267 (MTKFVFVTGG…AQQVLKFMHL (267 aa)) form an amidoligase domain region. Ser13 serves as a coordination point for CTP. Ser13 contributes to the UTP binding site. Residues 14–19 (SIGKGI) and Asp71 each bind ATP. Asp71 and Glu141 together coordinate Mg(2+). CTP-binding positions include 148 to 150 (DIE), 188 to 193 (KTKPTQ), and Lys224. Residues 188-193 (KTKPTQ) and Lys224 each bind UTP. An ATP-binding site is contributed by Ala242. The Glutamine amidotransferase type-1 domain occupies 299–535 (YVQLSDAYLS…VGACLADNGN (237 aa)). Residue Gly354 participates in L-glutamine binding. The active-site Nucleophile; for glutamine hydrolysis is Cys381. L-glutamine contacts are provided by residues 382 to 385 (LGMQ), Glu405, and Arg463. Catalysis depends on residues His508 and Glu510. The segment at 536 to 555 (NANHHDSTPAEPLVSEPLSS) is disordered.

The protein belongs to the CTP synthase family. In terms of assembly, homotetramer.

It carries out the reaction UTP + L-glutamine + ATP + H2O = CTP + L-glutamate + ADP + phosphate + 2 H(+). It catalyses the reaction L-glutamine + H2O = L-glutamate + NH4(+). The catalysed reaction is UTP + NH4(+) + ATP = CTP + ADP + phosphate + 2 H(+). Its pathway is pyrimidine metabolism; CTP biosynthesis via de novo pathway; CTP from UDP: step 2/2. With respect to regulation, allosterically activated by GTP, when glutamine is the substrate; GTP has no effect on the reaction when ammonia is the substrate. The allosteric effector GTP functions by stabilizing the protein conformation that binds the tetrahedral intermediate(s) formed during glutamine hydrolysis. Inhibited by the product CTP, via allosteric rather than competitive inhibition. Catalyzes the ATP-dependent amination of UTP to CTP with either L-glutamine or ammonia as the source of nitrogen. Regulates intracellular CTP levels through interactions with the four ribonucleotide triphosphates. The protein is CTP synthase of Acaryochloris marina (strain MBIC 11017).